A 73-amino-acid polypeptide reads, in one-letter code: NAD(P)H-quinone oxidoreductase subunit L (73 aa).

2 helical membrane-spanning segments follow: residues 7–27 and 44–64; these read LIGL…PFLF and VLMF…APFM.

It belongs to the complex I NdhL subunit family. In terms of assembly, NDH-1 can be composed of about 15 different subunits; different subcomplexes with different compositions have been identified which probably have different functions.

Its subcellular location is the cellular thylakoid membrane. The enzyme catalyses a plastoquinone + NADH + (n+1) H(+)(in) = a plastoquinol + NAD(+) + n H(+)(out). It carries out the reaction a plastoquinone + NADPH + (n+1) H(+)(in) = a plastoquinol + NADP(+) + n H(+)(out). NDH-1 shuttles electrons from an unknown electron donor, via FMN and iron-sulfur (Fe-S) centers, to quinones in the respiratory and/or the photosynthetic chain. The immediate electron acceptor for the enzyme in this species is believed to be plastoquinone. Couples the redox reaction to proton translocation, and thus conserves the redox energy in a proton gradient. Cyanobacterial NDH-1 also plays a role in inorganic carbon-concentration. This Synechococcus sp. (strain JA-3-3Ab) (Cyanobacteria bacterium Yellowstone A-Prime) protein is NAD(P)H-quinone oxidoreductase subunit L.